A 178-amino-acid polypeptide reads, in one-letter code: Prion-like protein doppel (178 aa).

The N-terminal stretch at 1–25 (MRKHLGGCWLAIVCVLLFSQLSSVK) is a signal peptide. Residues 27–50 (RGIKHRIKWNRKVLPSTSQVTEAH) form a flexible tail region. A globular region spans residues 51–154 (TAEIRPGAFI…KHCDFWLERG (104 aa)). 2 disulfide bridges follow: Cys94–Cys147 and Cys108–Cys142. N-linked (GlcNAc...) asparagine glycans are attached at residues Asn98 and Asn110. Positions 124–141 (KQDNKLYQRVLWQLIREL) are cu(2+) binding. Gly154 carries the GPI-anchor amidated glycine lipid modification. Positions 155 to 178 (AGLQVTLDQPMMLCLLVFIWFIVK) are cleaved as a propeptide — removed in mature form.

This sequence belongs to the prion family. In terms of processing, N-glycosylated. Post-translationally, O-glycosylated. Strongly expressed in testis. Detected at low levels in lymph node, spleen and ovary.

It localises to the cell membrane. Functionally, required for normal acrosome reaction and for normal male fertility. Can bind Cu(2+). This chain is Prion-like protein doppel (PRND), found in Ovis aries (Sheep).